A 318-amino-acid chain; its full sequence is L-lactate dehydrogenase (318 aa).

NAD(+) contacts are provided by residues valine 18, aspartate 39, lysine 44, tyrosine 69, and 83–84 (GA). The substrate site is built by glutamine 86 and arginine 92. NAD(+) contacts are provided by residues serine 105, 122 to 124 (VSN), and serine 147. Residue 124–127 (NPVD) participates in substrate binding. 152–155 (DTSR) serves as a coordination point for substrate. Histidine 179 functions as the Proton acceptor in the catalytic mechanism. Tyrosine 225 is subject to Phosphotyrosine. Threonine 234 serves as a coordination point for substrate.

It belongs to the LDH/MDH superfamily. LDH family. As to quaternary structure, homotetramer.

The protein localises to the cytoplasm. It carries out the reaction (S)-lactate + NAD(+) = pyruvate + NADH + H(+). Its pathway is fermentation; pyruvate fermentation to lactate; (S)-lactate from pyruvate: step 1/1. In terms of biological role, catalyzes the conversion of lactate to pyruvate. This chain is L-lactate dehydrogenase, found in Clostridium botulinum (strain Kyoto / Type A2).